A 76-amino-acid chain; its full sequence is uncharacterized protein (76 aa).

This is an uncharacterized protein from Dictyostelium discoideum (Social amoeba).